A 405-amino-acid chain; its full sequence is Coenzyme F420 hydrogenase subunit alpha (405 aa).

Ni(2+) contacts are provided by Cys-63, Cys-66, Cys-380, and Cys-383.

This sequence belongs to the [NiFe]/[NiFeSe] hydrogenase large subunit family. Heterocomplex of the form (alpha(1)beta(1)gamma(1))(8). Requires Ni(2+) as cofactor. Iron-sulfur cluster is required as a cofactor. It depends on FAD as a cofactor.

It carries out the reaction oxidized coenzyme F420-(gamma-L-Glu)(n) + H2 + H(+) = reduced coenzyme F420-(gamma-L-Glu)(n). In terms of biological role, reduces the physiological low-potential two-electron acceptor coenzyme F420, and the artificial one-electron acceptor methylviologen. The sequence is that of Coenzyme F420 hydrogenase subunit alpha (frhA) from Methanothermobacter thermautotrophicus (strain ATCC 29096 / DSM 1053 / JCM 10044 / NBRC 100330 / Delta H) (Methanobacterium thermoautotrophicum).